The primary structure comprises 234 residues: Thymidine kinase, cytosolic (234 aa).

Ser2 bears the N-acetylserine mark. Phosphoserine is present on residues Ser2 and Ser13. Residues 26 to 33 (GPMFSGKS), 58 to 60 (DTR), and 97 to 100 (DEGQ) each bind ATP. Glu98 serves as the catalytic Proton acceptor. A substrate-binding site is contributed by Phe128. The Zn(2+) site is built by Cys153 and Cys156. Residues 172-176 (VEVIG) and Tyr181 each bind substrate. 2 residues coordinate Zn(2+): Cys185 and Cys188. The KEN box motif lies at 203–205 (KEN). Ser231 is modified (phosphoserine).

This sequence belongs to the thymidine kinase family. In terms of assembly, homotetramer. Tetramerization from dimerization is induced by ATP and increases catalytic efficiency due to a high affinity for thymidine. Tetramerization is inhibited by phosphorylation at Ser-13. Interacts (via the KEN box) with FZR1. Post-translationally, phosphorylated on Ser-13 in mitosis. Phosphorylation of Ser-13 by CDK1 during mitosis reduces homotetramerization and catalytic efficiency when DNA replication is complete and intracellular TK1 is still present at a high level. Polyubiquitinated. Postmitosis, ubiquitination leads to proteasomal degradation. The KEN box sequence located at the C-terminal region targets for degradation by the anaphase promoting complex (APC/C) activated and rate-limited by FZR1.

It localises to the cytoplasm. It carries out the reaction thymidine + ATP = dTMP + ADP + H(+). In terms of biological role, cell-cycle-regulated enzyme of importance in nucleotide metabolism. Catalyzes the first enzymatic step in the salvage pathway converting thymidine into thymidine monophosphate. Transcriptional regulation limits expression to the S phase of the cell cycle and transient expression coincides with the oscillation in the intracellular dTTP concentration. Also important for the activation of anticancer and antiviral nucleoside analog prodrugs such as 1-b-d-arabinofuranosylcytosine (AraC) and 3c-azido-3c-deoxythymidine (AZT). The protein is Thymidine kinase, cytosolic of Homo sapiens (Human).